A 234-amino-acid chain; its full sequence is Phosphoribosylaminoimidazole-succinocarboxamide synthase (234 aa).

It belongs to the SAICAR synthetase family.

It catalyses the reaction 5-amino-1-(5-phospho-D-ribosyl)imidazole-4-carboxylate + L-aspartate + ATP = (2S)-2-[5-amino-1-(5-phospho-beta-D-ribosyl)imidazole-4-carboxamido]succinate + ADP + phosphate + 2 H(+). It participates in purine metabolism; IMP biosynthesis via de novo pathway; 5-amino-1-(5-phospho-D-ribosyl)imidazole-4-carboxamide from 5-amino-1-(5-phospho-D-ribosyl)imidazole-4-carboxylate: step 1/2. The sequence is that of Phosphoribosylaminoimidazole-succinocarboxamide synthase from Streptococcus uberis (strain ATCC BAA-854 / 0140J).